A 454-amino-acid polypeptide reads, in one-letter code: uncharacterized protein (454 aa).

The 42-residue stretch at 364–405 folds into the HNH domain; the sequence is CSRPGCDAPAYHSEVHHVTPWTTTHRTDINDLTLACGPDNRL. A disordered region spans residues 415 to 434; that stretch reads NAKGDTEWLPPAHLDHGQPR.

The protein belongs to the Rv1128c/1148c/1588c/1702c/1945/3466 family.

This is an uncharacterized protein from Mycobacterium tuberculosis (strain CDC 1551 / Oshkosh).